We begin with the raw amino-acid sequence, 281 residues long: Tetraspanin-5 (281 aa).

The Cytoplasmic segment spans residues 1-7; the sequence is MNRMSNT. The helical transmembrane segment at 8–28 threads the bilayer; the sequence is VIGFLNILTLISSIVLLGSAL. Topologically, residues 29–44 are extracellular; the sequence is WMGRSKTTCEHFLQKP. Residues 45–65 traverse the membrane as a helical segment; that stretch reads LLILGLAILILSVAGLVGACC. Topologically, residues 66 to 74 are cytoplasmic; that stretch reads DVAWVLWVY. A helical membrane pass occupies residues 75 to 95; it reads LFFMVFIIVALMGLTLFGFIV. The Extracellular segment spans residues 96-221; sequence TSHSGGVVVD…TVRRDWHKLS (126 aa). Residues 222–242 traverse the membrane as a helical segment; it reads LVNVIVVIFLIAVYCVGCCAF. The Cytoplasmic segment spans residues 243-281; it reads KNAKRPQHYGFPYGRYGMSKSRPGWEQSWSRWWHGRDRY.

This sequence belongs to the tetraspanin (TM4SF) family.

It is found in the membrane. May be involved in the regulation of cell differentiation. The protein is Tetraspanin-5 (TET5) of Arabidopsis thaliana (Mouse-ear cress).